The primary structure comprises 440 residues: tRNA-2-methylthio-N(6)-dimethylallyladenosine synthase (440 aa).

The MTTase N-terminal domain maps to 4–122; that stretch reads KSYYIITHGC…LPKILERVFE (119 aa). The [4Fe-4S] cluster site is built by C13, C49, C83, C159, C163, and C166. The Radical SAM core domain maps to 145 to 375; the sequence is REPGVRAWVT…IELQNGISLE (231 aa). A TRAM domain is found at 378 to 440; it reads KNEEGNIHEI…KLFHLEGVLV (63 aa).

This sequence belongs to the methylthiotransferase family. MiaB subfamily. In terms of assembly, monomer. It depends on [4Fe-4S] cluster as a cofactor.

It localises to the cytoplasm. It catalyses the reaction N(6)-dimethylallyladenosine(37) in tRNA + (sulfur carrier)-SH + AH2 + 2 S-adenosyl-L-methionine = 2-methylsulfanyl-N(6)-dimethylallyladenosine(37) in tRNA + (sulfur carrier)-H + 5'-deoxyadenosine + L-methionine + A + S-adenosyl-L-homocysteine + 2 H(+). Functionally, catalyzes the methylthiolation of N6-(dimethylallyl)adenosine (i(6)A), leading to the formation of 2-methylthio-N6-(dimethylallyl)adenosine (ms(2)i(6)A) at position 37 in tRNAs that read codons beginning with uridine. The chain is tRNA-2-methylthio-N(6)-dimethylallyladenosine synthase from Carboxydothermus hydrogenoformans (strain ATCC BAA-161 / DSM 6008 / Z-2901).